A 264-amino-acid chain; its full sequence is 3-methyl-2-oxobutanoate hydroxymethyltransferase (264 aa).

Aspartate 45 and aspartate 84 together coordinate Mg(2+). 3-methyl-2-oxobutanoate is bound by residues aspartate 45 to serine 46, aspartate 84, and lysine 112. Glutamate 114 serves as a coordination point for Mg(2+). The active-site Proton acceptor is glutamate 181.

The protein belongs to the PanB family. Homodecamer; pentamer of dimers. It depends on Mg(2+) as a cofactor.

It is found in the cytoplasm. It catalyses the reaction 3-methyl-2-oxobutanoate + (6R)-5,10-methylene-5,6,7,8-tetrahydrofolate + H2O = 2-dehydropantoate + (6S)-5,6,7,8-tetrahydrofolate. It functions in the pathway cofactor biosynthesis; (R)-pantothenate biosynthesis; (R)-pantoate from 3-methyl-2-oxobutanoate: step 1/2. Its function is as follows. Catalyzes the reversible reaction in which hydroxymethyl group from 5,10-methylenetetrahydrofolate is transferred onto alpha-ketoisovalerate to form ketopantoate. This chain is 3-methyl-2-oxobutanoate hydroxymethyltransferase, found in Aliivibrio fischeri (strain MJ11) (Vibrio fischeri).